A 403-amino-acid chain; its full sequence is MLTQKTKDIVKATAPVLAEHGYDIIKCFYQRMFEAHPELKNVFNMAHQEQGQQQQALARAVYAYAENIEDPNSLMAVLKNIANKHASLGVKPEQYPIVGEHLLAAIKEVLGNAATDDIISAWAQAYGNLADVLMGMESELYERSAEQPGGWKGWRTFVIREKRPESDVITSFILEPADGGPVVNFEPGQYTSVAIDVPALGLQQIRQYSLSDMPNGRSYRISVKREGGGPQPPGYVSNLLHDHVNVGDQVKLAAPYGSFHIDVDAKTPIVLISGGVGLTPMVSMLKVALQAPPRQVVFVHGARNSAVHAMRDRLREAAKTYENLDLFVFYDQPLPEDVQGRDYDYPGLVDVKQIEKSILLPDADYYICGPIPFMRMQHDALKNLGIHEARIHYEVFGPDLFAE.

Residues 1–138 (MLTQKTKDIV…LADVLMGMES (138 aa)) enclose the Globin domain. Position 85 (histidine 85) interacts with heme b. Active-site charge relay system residues include tyrosine 95 and glutamate 137. Positions 149 to 403 (GGWKGWRTFV…EVFGPDLFAE (255 aa)) are reductase. Positions 152 to 262 (KGWRTFVIRE…AAPYGSFHID (111 aa)) constitute an FAD-binding FR-type domain. FAD contacts are provided by residues tyrosine 190 and 206-209 (RQYS). 275–280 (GVGLTP) is a binding site for NADP(+). Residue 395-398 (VFGP) coordinates FAD.

It belongs to the globin family. Two-domain flavohemoproteins subfamily. The protein in the C-terminal section; belongs to the flavoprotein pyridine nucleotide cytochrome reductase family. Monomer. FAD is required as a cofactor. The cofactor is heme b.

Its subcellular location is the cytoplasm. It catalyses the reaction 2 nitric oxide + NADPH + 2 O2 = 2 nitrate + NADP(+) + H(+). It carries out the reaction 2 nitric oxide + NADH + 2 O2 = 2 nitrate + NAD(+) + H(+). Functionally, is involved in NO detoxification in an aerobic process, termed nitric oxide dioxygenase (NOD) reaction that utilizes O(2) and NAD(P)H to convert NO to nitrate, which protects the bacterium from various noxious nitrogen compounds. Therefore, plays a central role in the inducible response to nitrosative stress. Its function is as follows. In the presence of oxygen and NADH, FHP has NADH oxidase activity, which leads to the generation of superoxide and H(2)O(2), both in vitro and in vivo, and it has been suggested that FHP might act as an amplifier of superoxide stress. Under anaerobic conditions, FHP also exhibits nitric oxide reductase and FAD reductase activities. However, all these reactions are much lower than NOD activity. This chain is Flavohemoprotein (hmp), found in Cupriavidus necator (strain ATCC 17699 / DSM 428 / KCTC 22496 / NCIMB 10442 / H16 / Stanier 337) (Ralstonia eutropha).